The chain runs to 319 residues: FAD-dependent oxidoreductase FVFD30 (319 aa).

Arginine 6, aspartate 18, and lysine 25 together coordinate FAD. Lysine 129 and glycine 188 together coordinate NAD(+). NADP(+)-binding residues include lysine 129 and glycine 188. 2 residues coordinate FAD: aspartate 228 and tyrosine 265. Aspartate 228 serves as a coordination point for 6-hydroxy-FAD. Tyrosine 265 lines the NAD(+) pocket. Residue tyrosine 265 coordinates NADP(+). The chain crosses the membrane as a helical span at residues 281–301; the sequence is GVGYFGVWWGIVIGGWLASLL.

It belongs to the FAD-dependent oxidoreductase family.

It localises to the membrane. Functionally, probable FAD-dependent oxidoreductase that plays a role in the regulation of fruiting body development. This is FAD-dependent oxidoreductase FVFD30 from Flammulina velutipes (Agaricus velutipes).